The primary structure comprises 500 residues: NAD(P)H-quinone oxidoreductase chain 4, chloroplastic (500 aa).

Helical transmembrane passes span 4-24 (FPWL…ILFI), 37-57 (ICIC…NFQL), 80-100 (LGID…TTLA), 134-154 (LLLF…LLSM), 167-187 (FILY…GMGL), 208-228 (GLEI…PPII), 242-262 (HYST…YGLV), 272-292 (AHSL…IYAA), 330-350 (GAIL…FLAG), 386-406 (LASP…GIIT), 416-436 (ILIT…LLSM), and 462-482 (IFIL…PDFV).

It belongs to the complex I subunit 4 family.

Its subcellular location is the plastid. The protein resides in the chloroplast thylakoid membrane. It catalyses the reaction a plastoquinone + NADH + (n+1) H(+)(in) = a plastoquinol + NAD(+) + n H(+)(out). The enzyme catalyses a plastoquinone + NADPH + (n+1) H(+)(in) = a plastoquinol + NADP(+) + n H(+)(out). The chain is NAD(P)H-quinone oxidoreductase chain 4, chloroplastic from Amborella trichopoda.